A 1151-amino-acid chain; its full sequence is Calcium-activated potassium channel subunit alpha-1 (1151 aa).

The segment at 1–36 is disordered; it reads MSSNIHANHLSLDASSSSSSSSSSSSSSSSSSSVHE. Residues 1–59 lie on the Extracellular side of the membrane; it reads MSSNIHANHLSLDASSSSSSSSSSSSSSSSSSSVHEPKMDALIIPVTMEVPCDSRGQRM. Low complexity predominate over residues 15 to 33; sequence SSSSSSSSSSSSSSSSSSS. A helical membrane pass occupies residues 60–80; it reads WWAFLASSMVTFFGGLFIILL. Over 81–151 the chain is Cytoplasmic; it reads WRTLKYLWTV…MISAQTLTGR (71 aa). S-palmitoyl cysteine attachment occurs at residues Cys-91, Cys-92, and Cys-94. The chain crosses the membrane as a helical span at residues 152–172; sequence VLVVLVFALSIGALVIYFIDS. The Extracellular segment spans residues 173 to 187; sequence SNPIESCQNFYKDFT. The helical transmembrane segment at 188-208 threads the bilayer; sequence LQIDMAFNVFFLLYFGLRFIA. At 209–212 the chain is on the cytoplasmic side; sequence ANDK. Residues 213–233 form a helical membrane-spanning segment; the sequence is LWFWLEVNSVVDFFTVPPVFV. Topologically, residues 234–237 are extracellular; it reads SVYL. The chain crosses the membrane as a helical; Voltage-sensor span at residues 238–258; that stretch reads NRSWLGLRFLRALRLIQFSEI. At 259–273 the chain is on the cytoplasmic side; sequence LQFLNILKTSNSIKL. The chain crosses the membrane as a helical span at residues 274–294; it reads VNLLSIFISTWLTAAGFIHLV. Residues 295–308 lie on the Extracellular side of the membrane; that stretch reads ENSGDPWENFQNNQ. The segment at residues 309-331 is an intramembrane region (pore-forming); the sequence is ALTYWECVYLLMVTMSTVGYGDV. The Selectivity for potassium motif lies at 325-328; the sequence is TVGY. Residues 332-340 are Extracellular-facing; it reads YAKTTLGRL. The helical transmembrane segment at 341-361 threads the bilayer; that stretch reads FMVFFILGGLAMFASYVPEII. Residues 362–1151 are Cytoplasmic-facing; the sequence is ELIGNRKKYG…KQKYVQEERL (790 aa). The region spanning 380-522 is the RCK N-terminal 1 domain; that stretch reads RKHIVVCGHI…WNWKEGDDAI (143 aa). Glu-412, Gln-435, and Glu-437 together coordinate Mg(2+). Residues 529 to 549 form a segment S7 region; sequence LGFIAQSCLAQGLSTMLANLF. The interval 586 to 606 is segment S8; it reads LSFPTVCELCFVKLKLLMIAI. The tract at residues 650-654 is heme-binding motif; it reads CKACH. A disordered region spans residues 674 to 702; the sequence is EQPSTLSPKKKQRNGGMRNSPNSSPKLMR. Thr-678 is subject to Phosphothreonine. 3 positions are modified to phosphoserine: Ser-680, Ser-693, and Ser-697. A segment S9 region spans residues 752 to 772; that stretch reads VLSGHVVVCIFGDVSSALIGL. The 145-residue stretch at 754–898 folds into the RCK N-terminal 2 domain; it reads SGHVVVCIFG…MDRSSPDNSP (145 aa). Thr-885 carries the post-translational modification Phosphothreonine. Residues Ser-893 and Ser-897 each carry the phosphoserine modification. Residues 918–940 carry the Calcium bowl motif; that stretch reads TELVNDTNVQFLDQDDDDDPDTE. The Ca(2+) site is built by Gln-927, Asp-930, Asp-933, and Asp-935. The interval 947–967 is segment S10; the sequence is FACGTAFAVSVLDSLMSATYF. Residues 1101–1126 are compositionally biased toward low complexity; that stretch reads RASLSHSSHSSQSSSKKSSSVHSIPS. The disordered stretch occupies residues 1101–1151; sequence RASLSHSSHSSQSSSKKSSSVHSIPSTANRQNRPKSRESRDKQKYVQEERL. Basic and acidic residues predominate over residues 1135–1151; it reads KSRESRDKQKYVQEERL. Residues Ser-1136 and Ser-1139 each carry the phosphoserine modification.

It belongs to the potassium channel family. Calcium-activated (TC 1.A.1.3) subfamily. KCa1.1/KCNMA1 sub-subfamily. As to quaternary structure, homotetramer; which constitutes the calcium-activated potassium channel. Interacts with beta subunits KCNMB1, KCNMB2, KCNMB3 and KCNMB4. Interacts with gamma subunits LRRC26, LRRC38, LRRC52 and LRRC55. Beta and gamma subunits are accessory, and modulate its activity. Interacts with RAB11B. Phosphorylated. Phosphorylation by kinases such as PKA and/or PKG. In smooth muscles, phosphorylation affects its activity. Post-translationally, palmitoylation by ZDHHC22 and ZDHHC23 within the intracellular linker between the S0 and S1 transmembrane domains regulates localization to the plasma membrane. Depalmitoylated by LYPLA1 and LYPLAL1, leading to retard exit from the trans-Golgi network.

The protein resides in the cell membrane. It catalyses the reaction K(+)(in) = K(+)(out). Its activity is regulated as follows. Ethanol and carbon monoxide-bound heme increase channel activation. Heme inhibits channel activation. Functionally, potassium channel activated by both membrane depolarization or increase in cytosolic Ca(2+) that mediates export of K(+). It is also activated by the concentration of cytosolic Mg(2+). Its activation dampens the excitatory events that elevate the cytosolic Ca(2+) concentration and/or depolarize the cell membrane. It therefore contributes to repolarization of the membrane potential. Plays a key role in controlling excitability in a number of systems, such as regulation of the contraction of smooth muscle, the tuning of hair cells in the cochlea, regulation of transmitter release, and innate immunity. In smooth muscles, its activation by high level of Ca(2+), caused by ryanodine receptors in the sarcoplasmic reticulum, regulates the membrane potential. In cochlea cells, its number and kinetic properties partly determine the characteristic frequency of each hair cell and thereby helps to establish a tonotopic map. Kinetics of KCNMA1 channels are determined by alternative splicing, phosphorylation status and its combination with modulating beta subunits. Highly sensitive to both iberiotoxin (IbTx) and charybdotoxin (CTX). This Macaca mulatta (Rhesus macaque) protein is Calcium-activated potassium channel subunit alpha-1 (KCNMA1).